A 412-amino-acid polypeptide reads, in one-letter code: Peptidase T (412 aa).

His84 serves as a coordination point for Zn(2+). The active site involves Asp86. Asp146 lines the Zn(2+) pocket. Residue Glu179 is the Proton acceptor of the active site. 3 residues coordinate Zn(2+): Glu180, Asp202, and His385.

It belongs to the peptidase M20B family. Zn(2+) is required as a cofactor.

It is found in the cytoplasm. It catalyses the reaction Release of the N-terminal residue from a tripeptide.. Cleaves the N-terminal amino acid of tripeptides. This chain is Peptidase T, found in Haemophilus influenzae (strain PittGG).